Here is a 114-residue protein sequence, read N- to C-terminus: Late cornified envelope protein 1D (114 aa).

The span at 1–10 shows a compositional bias: low complexity; that stretch reads MSCQQSQQQC. Disordered stretches follow at residues 1-21 and 75-114; these read MSCQQSQQQCQPPPKCTPKCT and HHRRHRSHRRRPQSSDCCSQPSGGSSCCGGGSSQHSGGCC. A compositionally biased stretch (basic residues) spans 75 to 86; it reads HHRRHRSHRRRP. The span at 88 to 99 shows a compositional bias: low complexity; the sequence is SSDCCSQPSGGS.

Belongs to the LCE family. Interacts with CYSRT1. As to expression, skin-specific. Expression was readily detected in adult trunk skin, adult arm skin, fetal skin, penal skin, vulva, esophagus and tongue. Not expressed in the cervix, rectum, lung, colon, or placenta.

Its function is as follows. Precursors of the cornified envelope of the stratum corneum. The chain is Late cornified envelope protein 1D (LCE1D) from Homo sapiens (Human).